Reading from the N-terminus, the 80-residue chain is Protein pegasus (80 aa).

The N-terminal stretch at 1 to 22 (MKLSAVLLAIALLALSLVQCLG) is a signal peptide. The region spanning 24-80 (PDPSTKCVMECDTQEYRSICAADDKGSTKTYRNLCVMKTENCLQNANFQKISDKECP) is the Kazal-like domain. 3 disulfides stabilise this stretch: Cys30–Cys65, Cys34–Cys58, and Cys43–Cys79.

Interacts with wg; the interaction facilitates short-range diffusion of wg. Strongly expressed in the developing fly wing but is excluded from the presumptive wing margin.

It is found in the secreted. Its function is as follows. Increases short-range diffusion of the wingless/wg protein, enhancing its signaling and expression of target genes required for wing margin morphogenesis. May act as a serine protease inhibitor since it possess the Kazal serine protease inhibitor signature. This chain is Protein pegasus, found in Drosophila melanogaster (Fruit fly).